The following is a 788-amino-acid chain: Ribonucleoside-diphosphate reductase large subunit (788 aa).

In terms of domain architecture, ATP-cone spans 7–98 (TYVVKRDGRK…VSNLHKKTNK (92 aa)). ATP-binding positions include 11–12 (KR), 17–23 (EDVHFDK), Thr59, and Asp63. Ser208 and Ser223 together coordinate GDP. A disulfide bond links Cys224 and Cys450. DTTP contacts are provided by residues 232-234 (DSI), Lys249, Arg262, and 269-270 (AG). Asn433 contacts GDP. Catalysis depends on Asn433, which acts as the Proton acceptor. Catalysis depends on Cys435, which acts as the Cysteine radical intermediate. Residues Glu437 and 610–613 (TAST) each bind GDP. Catalysis depends on Glu437, which acts as the Proton acceptor.

Belongs to the ribonucleoside diphosphate reductase large chain family. As to quaternary structure, heterodimer of a large and a small subunit.

It carries out the reaction a 2'-deoxyribonucleoside 5'-diphosphate + [thioredoxin]-disulfide + H2O = a ribonucleoside 5'-diphosphate + [thioredoxin]-dithiol. With respect to regulation, under complex allosteric control mediated by deoxynucleoside triphosphates and ATP binding to separate specificity and activation sites on the large subunit. The type of nucleotide bound at the specificity site determines substrate preference. It seems probable that ATP makes the enzyme reduce CDP and UDP, dGTP favors ADP reduction and dTTP favors GDP reduction. Stimulated by ATP and inhibited by dATP binding to the activity site. In terms of biological role, provides the precursors necessary for DNA synthesis. Catalyzes the biosynthesis of deoxyribonucleotides from the corresponding ribonucleotides. This chain is Ribonucleoside-diphosphate reductase large subunit (rnr-1), found in Caenorhabditis elegans.